Here is a 161-residue protein sequence, read N- to C-terminus: RNA pyrophosphohydrolase (161 aa).

The Nudix hydrolase domain maps to 12 to 154 (PYRPGVGMMI…KRKLYQAVVK (143 aa)). Positions 46–67 (GGIVPGETPSIAAMREMLEEIG) match the Nudix box motif.

It belongs to the Nudix hydrolase family. RppH subfamily. A divalent metal cation serves as cofactor.

Accelerates the degradation of transcripts by removing pyrophosphate from the 5'-end of triphosphorylated RNA, leading to a more labile monophosphorylated state that can stimulate subsequent ribonuclease cleavage. This Rickettsia rickettsii (strain Iowa) protein is RNA pyrophosphohydrolase.